The primary structure comprises 326 residues: Eukaryotic translation initiation factor 2 subunit 1 (326 aa).

The S1 motif domain maps to 24 to 95; the sequence is DDLIMVKVNR…QKGYIDLSKR (72 aa). Ser-59 is modified (phosphoserine; by eIK1, eIK2 and PK4). The segment at 291–326 is disordered; it reads LDKHDGLSSDDEYSSDGDEDDSSNDDDNSSDEDDDD. A compositionally biased stretch (acidic residues) spans 298–326; sequence SSDDEYSSDGDEDDSSNDDDNSSDEDDDD.

It belongs to the eIF-2-alpha family. Post-translationally, phosphorylates at Ser-59 in mature trophozoites, schizonts and gametocytes but not in rings and young trophozoites. Phosphorylates at Ser-59 by eIK2 in salivary gland sporozoites but not in midgut and hemocoel sporozoites. Dephosphorylated at Ser-59 by UIS2. Phosphorylation of eIF2alpha subunit of the pre-initiation complex eIF2 inhibits recycling of inactive eIF2-GDP to active eIF2-GTP by limiting the activity of the guanine nucleotide exchange factor eIF2B and thus, inhibits protein translation.

The protein localises to the cytoplasm. Its subcellular location is the stress granule. Its function is as follows. Functions in the early steps of protein synthesis by forming a ternary complex with GTP and initiator tRNA. May regulate protein translation in response to amino acid starvation. May regulate protein at various stages of parasite development. This Plasmodium berghei (strain Anka) protein is Eukaryotic translation initiation factor 2 subunit 1.